Consider the following 541-residue polypeptide: Glucose-6-phosphate isomerase (541 aa).

Catalysis depends on Glu346, which acts as the Proton donor. Catalysis depends on residues His377 and Lys506.

It belongs to the GPI family.

The protein resides in the cytoplasm. The catalysed reaction is alpha-D-glucose 6-phosphate = beta-D-fructose 6-phosphate. It functions in the pathway carbohydrate biosynthesis; gluconeogenesis. The protein operates within carbohydrate degradation; glycolysis; D-glyceraldehyde 3-phosphate and glycerone phosphate from D-glucose: step 2/4. In terms of biological role, catalyzes the reversible isomerization of glucose-6-phosphate to fructose-6-phosphate. This chain is Glucose-6-phosphate isomerase, found in Agrobacterium fabrum (strain C58 / ATCC 33970) (Agrobacterium tumefaciens (strain C58)).